A 715-amino-acid polypeptide reads, in one-letter code: Integrator complex subunit 13 (715 aa).

Disordered regions lie at residues 572 to 612 (KPPE…SERI) and 626 to 659 (AEVI…SKGP). The Nuclear localization signal (NLS) motif lies at 581-591 (KRGRKREDKEE). The tract at residues 658–703 (GPMSLLSLWSSRINTANSRKHQEFVGRLNSVNNKAELYQHLKEENG) is cleavage module binding motif (CMBM).

The protein belongs to the Integrator subunit 13 family. As to quaternary structure, component of the Integrator complex, composed of core subunits INTS1, INTS2, INTS3, INTS4, INTS5, INTS6, INTS7, INTS8, INTS9/RC74, INTS10, INTS11/CPSF3L, INTS12, INTS13, INTS14 and INTS15. The core complex associates with protein phosphatase 2A subunits PPP2CA and PPP2R1A, to form the Integrator-PP2A (INTAC) complex. INTS13 is part of the tail subcomplex, composed of INTS10, INTS13, INTS14 and INTS15.

It is found in the nucleus. The protein localises to the cytoplasm. Functionally, component of the integrator complex, a multiprotein complex that terminates RNA polymerase II (Pol II) transcription in the promoter-proximal region of genes. The integrator complex provides a quality checkpoint during transcription elongation by driving premature transcription termination of transcripts that are unfavorably configured for transcriptional elongation: the complex terminates transcription by (1) catalyzing dephosphorylation of the C-terminal domain (CTD) of Pol II subunit POLR2A/RPB1 and SUPT5H/SPT5, (2) degrading the exiting nascent RNA transcript via endonuclease activity and (3) promoting the release of Pol II from bound DNA. The integrator complex is also involved in terminating the synthesis of non-coding Pol II transcripts, such as enhancer RNAs (eRNAs), small nuclear RNAs (snRNAs), telomerase RNAs and long non-coding RNAs (lncRNAs). Within the integrator complex, INTS13 is part of the integrator tail module and acts as a platform for the recruitment of transcription factors at promoters. Plays a role in gastrulation and early embryogenesis. This chain is Integrator complex subunit 13, found in Xenopus laevis (African clawed frog).